Consider the following 188-residue polypeptide: Large ribosomal subunit protein eL18 (188 aa).

Belongs to the eukaryotic ribosomal protein eL18 family.

It localises to the cytoplasm. The chain is Large ribosomal subunit protein eL18 (RpL18) from Drosophila melanogaster (Fruit fly).